Reading from the N-terminus, the 563-residue chain is Arylsulfatase K (563 aa).

A signal peptide spans 1–17; that stretch reads MLLLLVSVIVALALVAP. 2 residues coordinate Ca(2+): Asp40 and Cys80. Cys80 functions as the Nucleophile in the catalytic mechanism. Cys80 is modified (3-oxoalanine (Cys)). Residue Asn108 is glycosylated (N-linked (GlcNAc...) asparagine). Lys128 is a binding site for substrate. N-linked (GlcNAc...) asparagine glycosylation is present at Asn191. His249 serves as a coordination point for substrate. An N-linked (GlcNAc...) asparagine glycan is attached at Asn260. 2 residues coordinate Ca(2+): Asp311 and His312. 3 N-linked (GlcNAc...) asparagine glycosylation sites follow: Asn373, Asn411, and Asn496.

This sequence belongs to the sulfatase family. Ca(2+) is required as a cofactor. The conversion to 3-oxoalanine (also known as C-formylglycine, FGly), of a serine or cysteine residue in prokaryotes and of a cysteine residue in eukaryotes, is critical for catalytic activity. Post-translationally, the 75-kDa precursor undergoes proteolytic processing to yield a 23 kDa form. In terms of processing, N-glycosylated with both high mannose and complex type sugars.

The protein localises to the secreted. It is found in the lysosome. The enzyme catalyses an aryl sulfate + H2O = a phenol + sulfate + H(+). The catalysed reaction is Hydrolysis of the 2-sulfate groups of the 2-O-sulfo-D-glucuronate residues of chondroitin sulfate, heparin and heparitin sulfate.. Functionally, catalyzes the hydrolysis of pseudosubstrates such as p-nitrocatechol sulfate and p-nitrophenyl sulfate. Catalyzes the hydrolysis of the 2-sulfate groups of the 2-O-sulfo-D-glucuronate residues of chondroitin sulfate, heparin and heparitin sulfate. Acts selectively on 2-sulfoglucuronate and lacks activity against 2-sulfoiduronate. The chain is Arylsulfatase K (Arsk) from Rattus norvegicus (Rat).